Consider the following 620-residue polypeptide: 1-deoxy-D-xylulose-5-phosphate synthase (620 aa).

Residues His-80 and 121–123 (GHS) contribute to the thiamine diphosphate site. Mg(2+) is bound at residue Asp-152. Thiamine diphosphate is bound by residues 153-154 (GA), Asn-181, Tyr-288, and Glu-370. Asn-181 contacts Mg(2+).

This sequence belongs to the transketolase family. DXPS subfamily. Homodimer. Requires Mg(2+) as cofactor. Thiamine diphosphate serves as cofactor.

It catalyses the reaction D-glyceraldehyde 3-phosphate + pyruvate + H(+) = 1-deoxy-D-xylulose 5-phosphate + CO2. It participates in metabolic intermediate biosynthesis; 1-deoxy-D-xylulose 5-phosphate biosynthesis; 1-deoxy-D-xylulose 5-phosphate from D-glyceraldehyde 3-phosphate and pyruvate: step 1/1. In terms of biological role, catalyzes the acyloin condensation reaction between C atoms 2 and 3 of pyruvate and glyceraldehyde 3-phosphate to yield 1-deoxy-D-xylulose-5-phosphate (DXP). This is 1-deoxy-D-xylulose-5-phosphate synthase from Pseudoalteromonas translucida (strain TAC 125).